A 954-amino-acid polypeptide reads, in one-letter code: Valine--tRNA ligase (954 aa).

The 'HIGH' region signature appears at 48–58; the sequence is PNVTGSLHMGH. Positions 560 to 564 match the 'KMSKS' region motif; sequence KMSKS. Lys-563 contributes to the ATP binding site. Positions 883-954 form a coiled coil; that stretch reads AGFINKEAEL…QTQYQAIENL (72 aa).

This sequence belongs to the class-I aminoacyl-tRNA synthetase family. ValS type 1 subfamily. In terms of assembly, monomer.

The protein resides in the cytoplasm. It catalyses the reaction tRNA(Val) + L-valine + ATP = L-valyl-tRNA(Val) + AMP + diphosphate. Catalyzes the attachment of valine to tRNA(Val). As ValRS can inadvertently accommodate and process structurally similar amino acids such as threonine, to avoid such errors, it has a 'posttransfer' editing activity that hydrolyzes mischarged Thr-tRNA(Val) in a tRNA-dependent manner. This chain is Valine--tRNA ligase, found in Actinobacillus pleuropneumoniae serotype 5b (strain L20).